Reading from the N-terminus, the 279-residue chain is Phycobilisome rod-core linker polypeptide CpcG1 (279 aa).

Residues 11–189 enclose the PBS-linker domain; sequence SSQNQRVEGY…YWRDRQTLNA (179 aa).

It belongs to the phycobilisome linker protein family. As to quaternary structure, part of the phycobilisome, a hemidiscoidal structure that is composed of two distinct substructures: a core complex and a number of rods radiating from the core.

It is found in the cellular thylakoid membrane. Its function is as follows. Rod-core linker protein required for attachment of phycocyanin to allophycocyanin in cores of phycobilisomes. Functionally, linker polypeptides determine the state of aggregation and the location of the disk-shaped phycobiliprotein units within the phycobilisome and modulate their spectroscopic properties in order to mediate a directed and optimal energy transfer. In Nostoc sp. (strain PCC 7120 / SAG 25.82 / UTEX 2576), this protein is Phycobilisome rod-core linker polypeptide CpcG1.